We begin with the raw amino-acid sequence, 457 residues long: D-hydantoinase (457 aa).

His-57 and His-59 together coordinate Zn(2+). Phosphoserine is present on Ser-69. Lys-148 contributes to the Zn(2+) binding site. Position 148 is an N6-carboxylysine (Lys-148). Tyr-153 serves as a coordination point for substrate. Zn(2+)-binding residues include His-181 and His-237. Residue Thr-286 participates in substrate binding. Asp-313 is a Zn(2+) binding site. Position 335 (Asn-335) interacts with substrate.

The protein belongs to the metallo-dependent hydrolases superfamily. Hydantoinase/dihydropyrimidinase family. In terms of assembly, homodimer and homotetramer. Requires Zn(2+) as cofactor. Post-translationally, carboxylation allows a single lysine to coordinate two zinc ions.

In terms of biological role, catalyzes the stereospecific hydrolysis of the cyclic amide bond of D-hydantoin derivatives. The sequence is that of D-hydantoinase (hyuA) from Ralstonia pickettii (Burkholderia pickettii).